A 161-amino-acid polypeptide reads, in one-letter code: 2-C-methyl-D-erythritol 2,4-cyclodiphosphate synthase (161 aa).

A divalent metal cation contacts are provided by aspartate 10 and histidine 12. Residues 10-12 (DVH) and 36-37 (HS) each bind 4-CDP-2-C-methyl-D-erythritol 2-phosphate. An a divalent metal cation-binding site is contributed by histidine 44. 4-CDP-2-C-methyl-D-erythritol 2-phosphate-binding positions include 58-60 (DIG), 63-67 (FSDTD), and arginine 144.

The protein belongs to the IspF family. In terms of assembly, homotrimer. A divalent metal cation is required as a cofactor.

It catalyses the reaction 4-CDP-2-C-methyl-D-erythritol 2-phosphate = 2-C-methyl-D-erythritol 2,4-cyclic diphosphate + CMP. It participates in isoprenoid biosynthesis; isopentenyl diphosphate biosynthesis via DXP pathway; isopentenyl diphosphate from 1-deoxy-D-xylulose 5-phosphate: step 4/6. In terms of biological role, involved in the biosynthesis of isopentenyl diphosphate (IPP) and dimethylallyl diphosphate (DMAPP), two major building blocks of isoprenoid compounds. Catalyzes the conversion of 4-diphosphocytidyl-2-C-methyl-D-erythritol 2-phosphate (CDP-ME2P) to 2-C-methyl-D-erythritol 2,4-cyclodiphosphate (ME-CPP) with a corresponding release of cytidine 5-monophosphate (CMP). This is 2-C-methyl-D-erythritol 2,4-cyclodiphosphate synthase from Burkholderia ambifaria (strain ATCC BAA-244 / DSM 16087 / CCUG 44356 / LMG 19182 / AMMD) (Burkholderia cepacia (strain AMMD)).